The primary structure comprises 338 residues: Legumin B (338 aa).

The tract at residues 16-162 (SLNTKEDTAK…RQHSKGRKNG (147 aa)) is disordered. Residues 18 to 44 (NTKEDTAKRLRSPQDERGQIVKVEDGL) are compositionally biased toward basic and acidic residues. Composition is skewed to acidic residues over residues 82-92 (DEDEDEEEEEE) and 136-150 (EEEE…EEEE). The 148-residue stretch at 174–321 (ENIARPSRGD…AFGLRHSQVA (148 aa)) folds into the Cupin type-1 domain.

Belongs to the 11S seed storage protein (globulins) family. As to quaternary structure, hexamer; each subunit is composed of an acidic and a basic chain derived from a single precursor and linked by a disulfide bond.

Its function is as follows. This protein found in the seeds of many leguminous and non-leguminous plants is the source of sulfur-containing amino acids in seed meals. The sequence is that of Legumin B (LEGB) from Pisum sativum (Garden pea).